We begin with the raw amino-acid sequence, 1363 residues long: Spike glycoprotein (1363 aa).

A signal peptide spans 1 to 13 (MFLILLISLPTAF). At 14–1307 (AVIGDLKCTT…GTYEYYVKWP (1294 aa)) the chain is on the extracellular side. In terms of domain architecture, BetaCoV S1-NTD spans 15 to 298 (VIGDLKCTTV…DFMSEIKCKT (284 aa)). 5 cysteine pairs are disulfide-bonded: Cys21/Cys165, Cys160/Cys193, Cys172/Cys252, Cys286/Cys296, and Cys331/Cys356. Asn59 and Asn133 each carry an N-linked (GlcNAc...) asparagine; by host glycan. An N-linked (GlcNAc...) asparagine; by host glycan is attached at Asn198. The 289-residue stretch at 329-617 (PDCNIEAWLN…DVNSGTTCST (289 aa)) folds into the BetaCoV S1-CTD domain. Residue Asn359 is glycosylated (N-linked (GlcNAc...) asparagine; by host). Cystine bridges form between Cys374/Cys427 and Cys386/Cys615. 7 N-linked (GlcNAc...) asparagine; by host glycosylation sites follow: Asn437, Asn649, Asn676, Asn696, Asn714, Asn739, and Asn788. 2 fusion peptide regions span residues 914–935 (SAIE…VEAY) and 933–953 (EAYN…VQSY). Asn937 is a glycosylation site (N-linked (GlcNAc...) asparagine; by host). Cys938 and Cys949 are oxidised to a cystine. The tract at residues 1014-1064 (QKLIANAFNNALGAIQEGFDATNSALVKIQAVVNANAEALNNLLQQLSNRF) is heptad repeat 1. Residues 1043–1087 (QAVVNANAEALNNLLQQLSNRFGAISSSLQEILSRLDALEAQAQI) adopt a coiled-coil conformation. Asn1194, Asn1224, Asn1234, Asn1253, Asn1267, and Asn1288 each carry an N-linked (GlcNAc...) asparagine; by host glycan. The interval 1258-1296 (APDLSLDYINVTFLDLQDEMNRLQEAIKVLNQSYINLKD) is heptad repeat 2. Residues 1269–1297 (TFLDLQDEMNRLQEAIKVLNQSYINLKDI) are a coiled coil. The helical transmembrane segment at 1308–1328 (WYVWLLIGFAGVAMLVLLFFI) threads the bilayer. The Cytoplasmic portion of the chain corresponds to 1329–1363 (CCCTGCGTSCFKKCGGCCDDYTGHQELVIKTSHDD). A KxHxx motif is present at residues 1359 to 1363 (TSHDD).

The protein belongs to the betacoronaviruses spike protein family. Homotrimer; each monomer consists of a S1 and a S2 subunit. The resulting peplomers protrude from the virus surface as spikes. Post-translationally, specific enzymatic cleavages in vivo yield mature proteins. The precursor is processed into S1 and S2 by host cell furin or another cellular protease to yield the mature S1 and S2 proteins. Additionally, a second cleavage leads to the release of a fusion peptide after viral attachment to host cell receptor. The cytoplasmic Cys-rich domain is palmitoylated. Spike glycoprotein is digested within host endosomes.

It localises to the virion membrane. The protein resides in the host endoplasmic reticulum-Golgi intermediate compartment membrane. The protein localises to the host cell membrane. Attaches the virion to the cell membrane by interacting with host receptor, initiating the infection. In terms of biological role, mediates fusion of the virion and cellular membranes by acting as a class I viral fusion protein. Under the current model, the protein has at least three conformational states: pre-fusion native state, pre-hairpin intermediate state, and post-fusion hairpin state. During viral and target cell membrane fusion, the coiled coil regions (heptad repeats) assume a trimer-of-hairpins structure, positioning the fusion peptide in close proximity to the C-terminal region of the ectodomain. The formation of this structure appears to drive apposition and subsequent fusion of viral and target cell membranes. Functionally, acts as a viral fusion peptide which is unmasked following S2 cleavage occurring upon virus endocytosis. The chain is Spike glycoprotein from Bovine coronavirus (strain LSU-94LSS-051) (BCoV-LSU).